We begin with the raw amino-acid sequence, 289 residues long: 33 kDa chaperonin (289 aa).

Cystine bridges form between C235-C237 and C268-C271.

Belongs to the HSP33 family. Under oxidizing conditions two disulfide bonds are formed involving the reactive cysteines. Under reducing conditions zinc is bound to the reactive cysteines and the protein is inactive.

The protein localises to the cytoplasm. Its function is as follows. Redox regulated molecular chaperone. Protects both thermally unfolding and oxidatively damaged proteins from irreversible aggregation. Plays an important role in the bacterial defense system toward oxidative stress. This Bacillus licheniformis (strain ATCC 14580 / DSM 13 / JCM 2505 / CCUG 7422 / NBRC 12200 / NCIMB 9375 / NCTC 10341 / NRRL NRS-1264 / Gibson 46) protein is 33 kDa chaperonin.